Reading from the N-terminus, the 162-residue chain is Cyclic pyranopterin monophosphate synthase (162 aa).

Residues 79–81 (LCH) and 117–118 (ME) each bind substrate. The active site involves D132.

The protein belongs to the MoaC family. As to quaternary structure, homohexamer; trimer of dimers.

It catalyses the reaction (8S)-3',8-cyclo-7,8-dihydroguanosine 5'-triphosphate = cyclic pyranopterin phosphate + diphosphate. The protein operates within cofactor biosynthesis; molybdopterin biosynthesis. Catalyzes the conversion of (8S)-3',8-cyclo-7,8-dihydroguanosine 5'-triphosphate to cyclic pyranopterin monophosphate (cPMP). The sequence is that of Cyclic pyranopterin monophosphate synthase from Bordetella petrii (strain ATCC BAA-461 / DSM 12804 / CCUG 43448).